Here is a 928-residue protein sequence, read N- to C-terminus: DNA polymerase I (928 aa).

One can recognise a 5'-3' exonuclease domain in the interval 1–323 (MVQIPENPLI…IDESPSEPAA (323 aa)). Residues 324–517 (ALSYENYVTI…LHLKMWPELQ (194 aa)) enclose the 3'-5' exonuclease domain. A klenow fragment region spans residues 324-928 (ALSYENYVTI…GSGENWDQAH (605 aa)). The tract at residues 521 to 928 (GPLNVFENIE…GSGENWDQAH (408 aa)) is polymerase.

This sequence belongs to the DNA polymerase type-A family. Single-chain monomer with multiple functions.

It carries out the reaction DNA(n) + a 2'-deoxyribonucleoside 5'-triphosphate = DNA(n+1) + diphosphate. In addition to polymerase activity, this DNA polymerase exhibits 3'-5' and 5'-3' exonuclease activity. It is able to utilize nicked circular duplex DNA as a template and can unwind the parental DNA strand from its template. The polypeptide is DNA polymerase I (polA) (Salmonella typhimurium (strain LT2 / SGSC1412 / ATCC 700720)).